Here is a 282-residue protein sequence, read N- to C-terminus: Elongation factor Ts (282 aa).

The segment at 80–83 (TDFV) is involved in Mg(2+) ion dislocation from EF-Tu.

This sequence belongs to the EF-Ts family.

The protein resides in the cytoplasm. Its function is as follows. Associates with the EF-Tu.GDP complex and induces the exchange of GDP to GTP. It remains bound to the aminoacyl-tRNA.EF-Tu.GTP complex up to the GTP hydrolysis stage on the ribosome. The chain is Elongation factor Ts (tsf) from Chlamydia pneumoniae (Chlamydophila pneumoniae).